Reading from the N-terminus, the 317-residue chain is Protein-methionine-sulfoxide reductase catalytic subunit MsrP (317 aa).

Residues 1-40 (MNKFTKTDVTPEKLFIQRRKIIQGMSVLSAAAAFPNLAAA) constitute a signal peptide (tat-type signal). Mo-molybdopterin is bound by residues Asn-72, 75–76 (YE), Cys-129, Thr-164, Asn-216, Arg-221, and 232–234 (SIK).

The protein belongs to the MsrP family. Heterodimer of a catalytic subunit (MsrP) and a heme-binding subunit (MsrQ). It depends on Mo-molybdopterin as a cofactor. Predicted to be exported by the Tat system. The position of the signal peptide cleavage has not been experimentally proven.

The protein localises to the periplasm. The enzyme catalyses L-methionyl-[protein] + a quinone + H2O = L-methionyl-(S)-S-oxide-[protein] + a quinol. It catalyses the reaction L-methionyl-[protein] + a quinone + H2O = L-methionyl-(R)-S-oxide-[protein] + a quinol. Part of the MsrPQ system that repairs oxidized periplasmic proteins containing methionine sulfoxide residues (Met-O), using respiratory chain electrons. Thus protects these proteins from oxidative-stress damage caused by reactive species of oxygen and chlorine generated by the host defense mechanisms. MsrPQ is essential for the maintenance of envelope integrity under bleach stress, rescuing a wide series of structurally unrelated periplasmic proteins from methionine oxidation. The catalytic subunit MsrP is non-stereospecific, being able to reduce both (R-) and (S-) diastereoisomers of methionine sulfoxide. This chain is Protein-methionine-sulfoxide reductase catalytic subunit MsrP, found in Actinobacillus succinogenes (strain ATCC 55618 / DSM 22257 / CCUG 43843 / 130Z).